The primary structure comprises 331 residues: Probable transcriptional regulatory protein At2g25830 (331 aa).

This sequence belongs to the TACO1 family.

In Arabidopsis thaliana (Mouse-ear cress), this protein is Probable transcriptional regulatory protein At2g25830.